We begin with the raw amino-acid sequence, 122 residues long: Small ribosomal subunit protein uS13 (122 aa).

Residues 93 to 122 (RRGLPVRGQKTKTNARTRKGPKKTIANKKK) form a disordered region.

Belongs to the universal ribosomal protein uS13 family. In terms of assembly, part of the 30S ribosomal subunit. Forms a loose heterodimer with protein S19. Forms two bridges to the 50S subunit in the 70S ribosome.

Located at the top of the head of the 30S subunit, it contacts several helices of the 16S rRNA. In the 70S ribosome it contacts the 23S rRNA (bridge B1a) and protein L5 of the 50S subunit (bridge B1b), connecting the 2 subunits; these bridges are implicated in subunit movement. Contacts the tRNAs in the A and P-sites. The sequence is that of Small ribosomal subunit protein uS13 from Clostridium beijerinckii (strain ATCC 51743 / NCIMB 8052) (Clostridium acetobutylicum).